The sequence spans 520 residues: D-aminopeptidase (520 aa).

The active-site Nucleophile is S62. Residue K65 is the Proton donor/acceptor of the active site. An important for specificity region spans residues 477–487 (QRSMDAPSPGE). Residue D481 participates in substrate binding.

It belongs to the peptidase S12 family. Homodimer.

The enzyme catalyses Release of an N-terminal D-amino acid from a peptide, Xaa-|-Yaa-, in which Xaa is preferably D-Ala, D-Ser or D-Thr. D-amino acid amides and methyl esters also are hydrolyzed, as is glycine amide.. Inhibited by beta-lactam compounds such as 6-aminopenicillic acid, 7-aminocephalosporanic acid, benzylpenicillin and ampicillin. Inhibited by p-chloromercuribenzoate. In terms of biological role, hydrolyzes N-terminal residues in D-amino acid-containing peptides. The chain is D-aminopeptidase from Brucella anthropi (strain ATCC 49188 / DSM 6882 / CCUG 24695 / JCM 21032 / LMG 3331 / NBRC 15819 / NCTC 12168 / Alc 37) (Ochrobactrum anthropi).